A 497-amino-acid chain; its full sequence is 5'-AMP-activated protein kinase subunit gamma-3 (497 aa).

The disordered stretch occupies residues 16 to 143 (STQTPSWSSF…SSSSTDDLDQ (128 aa)). Residues 39 to 54 (GDSTSWPSPAMTTSAE) show a composition bias toward polar residues. The span at 68–79 (KSQEDVEERELP) shows a compositional bias: basic and acidic residues. CBS domains follow at residues 204-265 (MATS…RSPL), 287-345 (CFKP…QRTL), and 363-423 (TFRD…HLDI). Residues Arg232, 247–252 (MLTITD), Val292, 313–314 (HR), and Lys332 contribute to the ADP site. AMP contacts are provided by residues Arg232, 247–252 (MLTITD), Val292, His313, 313–314 (HR), Lys332, Thr363, Ala368, 389–390 (SA), 405–408 (SRFD), Arg432, Leu440, His461, 461–462 (HR), and 477–480 (SLSD). ATP contacts are provided by residues Arg232, 247-252 (MLTITD), Val292, 313-314 (HR), Arg314, and Lys332. The AMPK pseudosubstrate signature appears at 300–321 (LFEAVYTLIKNRIHRLPVLDPV). ADP-binding positions include 405–408 (SRFD), Arg432, Leu440, and 461–462 (HR). ATP-binding positions include 405–408 (SRFD), Arg432, Leu440, and 461–462 (HR). In terms of domain architecture, CBS 4 spans 435–494 (CLEGVLSCQPHETLGEVIDRIAREQVHRLVLVDETQHLLGVVSLSDILQALVLSPAGIDA).

This sequence belongs to the 5'-AMP-activated protein kinase gamma subunit family. In terms of assembly, AMPK is a heterotrimer of an alpha catalytic subunit (PRKAA1 or PRKAA2), a beta (PRKAB1 or PRKAB2) and a gamma non-catalytic subunits (PRKAG1, PRKAG2 or PRKAG3). Interacts with FNIP1 and FNIP2. In terms of processing, phosphorylated by ULK1; leading to negatively regulate AMPK activity and suggesting the existence of a regulatory feedback loop between ULK1 and AMPK. Glycosylated; O-GlcNAcylated by OGT, promoting the AMP-activated protein kinase (AMPK) activity.

AMP/ATP-binding subunit of AMP-activated protein kinase (AMPK), an energy sensor protein kinase that plays a key role in regulating cellular energy metabolism. In response to reduction of intracellular ATP levels, AMPK activates energy-producing pathways and inhibits energy-consuming processes: inhibits protein, carbohydrate and lipid biosynthesis, as well as cell growth and proliferation. AMPK acts via direct phosphorylation of metabolic enzymes, and by longer-term effects via phosphorylation of transcription regulators. AMPK also acts as a regulator of cellular polarity by remodeling the actin cytoskeleton; probably by indirectly activating myosin. The AMPK gamma3 subunit is a non-catalytic subunit with a regulatory role in muscle energy metabolism. It mediates binding to AMP, ADP and ATP, leading to AMPK activation or inhibition: AMP-binding results in allosteric activation of alpha catalytic subunit (PRKAA1 or PRKAA2) both by inducing phosphorylation and preventing dephosphorylation of catalytic subunits. ADP also stimulates phosphorylation, without stimulating already phosphorylated catalytic subunit. ATP promotes dephosphorylation of catalytic subunit, rendering the AMPK enzyme inactive. This chain is 5'-AMP-activated protein kinase subunit gamma-3 (PRKAG3), found in Bos taurus (Bovine).